The chain runs to 139 residues: Putative lipoprotein MIP_01412 (139 aa).

The signal sequence occupies residues 1 to 19; sequence MRNRTVAAGAVLTAALLGA. A lipid anchor (N-palmitoyl cysteine) is attached at Cys-20. Cys-20 carries the S-diacylglycerol cysteine lipid modification.

It belongs to the mycobacterial 19 kDa antigen family.

Its subcellular location is the cell membrane. The protein is Putative lipoprotein MIP_01412 of Mycobacterium indicus pranii (strain DSM 45239 / MTCC 9506).